The chain runs to 225 residues: Uracil-DNA glycosylase (225 aa).

D65 (proton acceptor) is an active-site residue.

The protein belongs to the uracil-DNA glycosylase (UDG) superfamily. UNG family.

The protein resides in the cytoplasm. It catalyses the reaction Hydrolyzes single-stranded DNA or mismatched double-stranded DNA and polynucleotides, releasing free uracil.. In terms of biological role, excises uracil residues from the DNA which can arise as a result of misincorporation of dUMP residues by DNA polymerase or due to deamination of cytosine. This is Uracil-DNA glycosylase from Anoxybacillus flavithermus (strain DSM 21510 / WK1).